The primary structure comprises 185 residues: Hypoxanthine/guanine phosphoribosyltransferase (185 aa).

The protein belongs to the purine/pyrimidine phosphoribosyltransferase family. Archaeal HPRT subfamily. As to quaternary structure, homodimer.

The protein resides in the cytoplasm. The catalysed reaction is IMP + diphosphate = hypoxanthine + 5-phospho-alpha-D-ribose 1-diphosphate. It catalyses the reaction GMP + diphosphate = guanine + 5-phospho-alpha-D-ribose 1-diphosphate. It functions in the pathway purine metabolism; IMP biosynthesis via salvage pathway; IMP from hypoxanthine: step 1/1. Functionally, catalyzes a salvage reaction resulting in the formation of IMP that is energically less costly than de novo synthesis. In Methanococcus maripaludis (strain C6 / ATCC BAA-1332), this protein is Hypoxanthine/guanine phosphoribosyltransferase.